We begin with the raw amino-acid sequence, 375 residues long: Oleosin-B6 (375 aa).

The tract at residues methionine 1 to lysine 32 is polar. 3 helical membrane passes run phenylalanine 21–phenylalanine 43, alanine 55–alanine 75, and leucine 81–methionine 101. Residues valine 33 to alanine 112 are hydrophobic. 2 disordered regions span residues proline 144 to serine 284 and isoleucine 303 to serine 375. The segment covering lysine 148 to serine 179 has biased composition (basic and acidic residues). Pro residues predominate over residues asparagine 193–proline 210. A run of 23 repeats spans residues proline 207–alanine 209, proline 210–alanine 212, proline 213–alanine 215, proline 216–alanine 218, proline 219–alanine 221, proline 222–alanine 224, proline 225–alanine 227, proline 228–alanine 230, proline 231–alanine 233, proline 234–alanine 236, proline 237–aspartate 239, proline 240–alanine 242, proline 243–alanine 245, proline 246–alanine 248, proline 249–threonine 251, proline 252–alanine 254, proline 255–alanine 257, proline 258–alanine 260, alanine 261–alanine 263, proline 264–alanine 266, proline 267–alanine 269, proline 270–alanine 272, and proline 273–alanine 275. The tract at residues proline 207–alanine 275 is 23 X 3 AA approximate tandem repeats of P-A-A. Low complexity predominate over residues alanine 211 to threonine 251. Positions proline 252–proline 280 are enriched in pro residues. Basic residues predominate over residues serine 316–arginine 331.

This sequence belongs to the oleosin family. As to expression, the full-length protein is found in the tapetal lipid bodies of immature anthers, the proteolytically cleaved C-terminal product is found on the coats of pollen grains. Not found in flowers, developing embryos or leaf tissue.

The protein resides in the lipid droplet. It is found in the membrane. Many of the major pollen coat proteins are derived from endoproteolytic cleavage of oleosin-like proteins. In Brassica napus (Rape), this protein is Oleosin-B6.